A 31-amino-acid chain; its full sequence is leu operon leader peptide (31 aa).

Its function is as follows. Involved in control of the biosynthesis of leucine. This is leu operon leader peptide (leuL) from Buchnera aphidicola subsp. Rhopalosiphum padi.